The following is a 140-amino-acid chain: Con-Ins Im2 (140 aa).

The first 29 residues, 1-29 (MALTWPSSPPVLLTLLLSLLALQLCAVYG), serve as a signal peptide directing secretion. 4 disulfides stabilise this stretch: C35-C123, C50-C126, C62-C139, and C125-C130. The propeptide at 64-110 (PRGYVSNWFTKRSAPNKPAETFVDQNLRGVLLNKREALSYLRPREPR) is c peptide. The residue at position 134 (E134) is a 4-carboxyglutamate; partial.

Belongs to the insulin family. Heterodimer of A and B chains; disulfide-linked. As to expression, expressed by the venom gland.

The protein resides in the secreted. Functionally, this venom insulin facilitates prey capture by rapidly inducing hypoglycemic shock. Intraperitoneal injection of this peptide into zebrafish lowers blood glucose with the same potency than human insulin. In vivo, when applied to water, this peptide reduces overall locomotor activity of zebrafish larvae, observed as a significant decrease in the percentage of time spent swimming and movement frequency. The sequence is that of Con-Ins Im2 from Conus imperialis (Imperial cone).